The following is a 263-amino-acid chain: MGQVSLYVESLGEGPDLVLLHGWAMHSGMWGSTRRSLAQHFRLHLVDLPGHGFSRGALPYKRGEKNGVSEDMVERVVEVLPPDCVICGWSLGGQLAIELALREPARVEKIILTSTTPSFVKREDWQWGMEELTLKAFAENLRRDFSTTMKRFLTLQVSGGGDAGKVLPEMRRLLFERSAPEPEALEAGLQIVLANDLRGKLRNIVQPTLLIHGENDVIAHPEAAAWMKQQFQDVELAMLPNCSHVPFLSYPDKFIANIVRFAR.

Residues Trp-23, 90-91 (SL), and 152-156 (FLTLQ) each bind substrate. Ser-90 acts as the Nucleophile in catalysis. Catalysis depends on residues Asp-216 and His-244. His-244 is a substrate binding site.

This sequence belongs to the AB hydrolase superfamily. Carboxylesterase BioH family. Monomer.

It is found in the cytoplasm. The enzyme catalyses 6-carboxyhexanoyl-[ACP] methyl ester + H2O = 6-carboxyhexanoyl-[ACP] + methanol + H(+). Its pathway is cofactor biosynthesis; biotin biosynthesis. The physiological role of BioH is to remove the methyl group introduced by BioC when the pimeloyl moiety is complete. It allows to synthesize pimeloyl-ACP via the fatty acid synthetic pathway through the hydrolysis of the ester bonds of pimeloyl-ACP esters. This Nitrosospira multiformis (strain ATCC 25196 / NCIMB 11849 / C 71) protein is Pimeloyl-[acyl-carrier protein] methyl ester esterase.